Reading from the N-terminus, the 593-residue chain is Arginine--tRNA ligase (593 aa).

Positions 138 to 148 (ANPTGPLHVGH) match the 'HIGH' region motif.

Belongs to the class-I aminoacyl-tRNA synthetase family. As to quaternary structure, monomer.

It is found in the cytoplasm. The catalysed reaction is tRNA(Arg) + L-arginine + ATP = L-arginyl-tRNA(Arg) + AMP + diphosphate. The chain is Arginine--tRNA ligase from Burkholderia orbicola (strain MC0-3).